The following is a 783-amino-acid chain: Aconitate hydratase, mitochondrial (783 aa).

The N-terminal 25 residues, 1–25 (MITTRLARMGALAPKSRLLFGTRGM), are a transit peptide targeting the mitochondrion. Substrate contacts are provided by residues Gln102 and 195 to 197 (DSH). Residues Cys388, Cys451, and Cys454 each contribute to the [4Fe-4S] cluster site. Substrate-binding residues include Arg477 and Arg482. The interval 524–555 (EFKLKAPTGDGLPSRGYDPGRDTYQAPPTDRS) is disordered. Substrate contacts are provided by residues Arg610 and 673–674 (SR).

This sequence belongs to the aconitase/IPM isomerase family. [4Fe-4S] cluster is required as a cofactor.

Its subcellular location is the mitochondrion. The catalysed reaction is citrate = D-threo-isocitrate. It catalyses the reaction (2R)-homocitrate = cis-homoaconitate + H2O. The protein operates within carbohydrate metabolism; tricarboxylic acid cycle; isocitrate from oxaloacetate: step 2/2. It functions in the pathway amino-acid biosynthesis; L-lysine biosynthesis via AAA pathway; L-alpha-aminoadipate from 2-oxoglutarate: step 2/5. Functionally, catalyzes the isomerization of citrate to isocitrate via cis-aconitate, a step in the citric acid cycle. Also catalyzes the reversible dehydration of (R)-homocitrate to cis-homoaconitate, a step in the alpha-aminoadipate pathway for lysine biosynthesis. This Emericella nidulans (strain FGSC A4 / ATCC 38163 / CBS 112.46 / NRRL 194 / M139) (Aspergillus nidulans) protein is Aconitate hydratase, mitochondrial (acoA).